We begin with the raw amino-acid sequence, 587 residues long: Membrane protein insertase YidC (587 aa).

Helical transmembrane passes span 5-25, 365-385, 430-450, 480-500, and 516-536; these read SVIGFSLIAVIMIVWLQFMKP, GLIIIIFAFLIKTVTWPLSLA, LGGCLPTVIQMPLLFAMFYVF, LPLYGDHIALMPILMAVTVFF, and IMIWMFPAMMLLFFNNMPSGL.

The protein belongs to the OXA1/ALB3/YidC family. Type 1 subfamily. Interacts with the Sec translocase complex via SecD. Specifically interacts with transmembrane segments of nascent integral membrane proteins during membrane integration.

It is found in the cell inner membrane. Its function is as follows. Required for the insertion and/or proper folding and/or complex formation of integral membrane proteins into the membrane. Involved in integration of membrane proteins that insert both dependently and independently of the Sec translocase complex, as well as at least some lipoproteins. Aids folding of multispanning membrane proteins. This Chlorobaculum parvum (strain DSM 263 / NCIMB 8327) (Chlorobium vibrioforme subsp. thiosulfatophilum) protein is Membrane protein insertase YidC.